The primary structure comprises 353 residues: Beta-agarase B (353 aa).

The N-terminal stretch at 1–17 (MYLIYLRLVFCCALLLG) is a signal peptide. Cys18 carries N-palmitoyl cysteine lipidation. Cys18 carries S-diacylglycerol cysteine lipidation. Residues 30 to 58 (LPVEQEQEQETEQEGEPEESSEQDLVEEV) are disordered. Acidic residues predominate over residues 32 to 58 (VEQEQEQETEQEGEPEESSEQDLVEEV). Residues 58–353 (VDWKDIPVPA…WIRIYKPVEK (296 aa)) enclose the GH16 domain. Residues 105-107 (YHN) and Asp181 contribute to the substrate site. Catalysis depends on Glu184, which acts as the Nucleophile. Catalysis depends on Glu189, which acts as the Proton donor. Substrate contacts are provided by His215, Arg219, Asp224, Gln226, and Glu308.

Belongs to the glycosyl hydrolase 16 family. In terms of assembly, homodimer.

The protein localises to the cell outer membrane. It carries out the reaction Hydrolysis of (1-&gt;4)-beta-D-galactosidic linkages in agarose, giving the tetramer as the predominant product.. Its function is as follows. Cleaves the beta-1,4-linkages between beta-D-galactose and alpha-L-3,6-anhydro-galactose residues in agarose. Cleaves agarose in a random manner with retention of the anomeric-bond configuration, producing beta-anomers that give rise progressively to alpha-anomers when mutarotation takes place. Also tolerant to hybrid substrates containing C6-sulfate groups at the -4, +1, and +3 positions. This is Beta-agarase B (agaB) from Zobellia galactanivorans (strain DSM 12802 / CCUG 47099 / CIP 106680 / NCIMB 13871 / Dsij).